A 1392-amino-acid polypeptide reads, in one-letter code: MNYSFTEKKRIRKSFAKRENVLEVPFLLATQIDSYAKFLQLENAFDKRTDDGLQAAFNSIFPIVSHNGYARLEFVYYTLGEPLFDIPECQLRGITYAAPLRARIRLVILDKEASKPTVKEVRENEVYMGEIPLMTPSGSFVINGTERVIVSQLHRSPGVFFEHDKGKTHSSGKLLFSARIIPYRGSWLDFEFDPKDLLYFRIDRRRKMPVTILLKALGYNNEQILDIFYDKETFYLSSNGVQTDLVAGRLKGETAKVDILDKEGNVLVAKGKRITAKNIRDITNAGLTRLDVEQESLLGKALAADLIDSETGEVLASANDEITEELLAKFDINGVKEITTLYINELDQGAYISNTLRTDETAGRQAARVAIYRMMRPGEPPTEEAVEQLFNRLFFSEDSYDLSRVGRMKFNTRTYEQKLSEAQQNSWYGRLLNETFAGAADKGGYVLSVEDIVASIATLVELRNGHGEVDDIDHLGNRRVRSVGELTENQFRSGLARVERAVKERLNQAESENLMPHDLINAKPVSAAIKEFFGSSQLSQFMDQTNPLSEVTHKRRVSALGPGGLTRERAGFEVRDVHPTHYGRVCPIETPEGPNIGLINSLSVYARTNDYGFLETPYRRVIDGKVTEEIDYLSAIEEGRYVIAQANADLDSDGNLIGDLVTCREKGETIMATPDRVQYMDVATGQVVSVAASLIPFLEHDDANRALMGANMQRQAVPCLRPEKPMVGTGIERSVAVDSATAIVARRGGVVEYVDANRVVIRVHDDEATAGEVGVDIYNLVKFTRSNQSTNINQRPAVKAGDVLQRGDLVADGASTDLGELALGQNMTIAFMPWNGYNYEDSILISEKVAADDRYTSIHIEELNVVARDTKLGAEDITRDIPNLSERMQNRLDESGIVYIGAEVEAGDVLVGKVTPKGETQLTPEEKLLRAIFGEKASDVKDTSLRMPTGMSGTVIDVQVFTREGIQRDKRAQSIIDSELKRYRLDLNDQLRIFDNDAFDRIERMIVGQKANGGPMKLTKGSEITTEYLAGLPSRHDWFDIRLTDEDLAKQLELIKLSLQQKREEADELYEIKKKKLTQGDELQPGVQKMVKVFIAIKRRLQAGDKMAGRHGNKGVVSRILPVEDMPYMADGRPVDIVLNPLGVPSRMNIGQILEVHLGWAAKGIGERIDRMLKERRKAGELREFLNKLYNGSGKKEDLDSLTDEEIIELASNLRKGASFASPVFDGAKESEIREMLNLAYPSEDPEVEKLGFNDSKTQITLYDGRSGEAFDRKVTVGVMHYLKLHHLVDEKMHARSTGPYSLVTQQPLGGKAQFGGQRFGEMEVWALEAYGAAYTLQEMLTVKSDDVNGRTKMYENIVKGEHKIDAGMPESFNVLVKEIRSLGLDIDLERY.

This sequence belongs to the RNA polymerase beta chain family. In terms of assembly, the RNAP catalytic core consists of 2 alpha, 1 beta, 1 beta' and 1 omega subunit. When a sigma factor is associated with the core the holoenzyme is formed, which can initiate transcription.

The catalysed reaction is RNA(n) + a ribonucleoside 5'-triphosphate = RNA(n+1) + diphosphate. DNA-dependent RNA polymerase catalyzes the transcription of DNA into RNA using the four ribonucleoside triphosphates as substrates. The protein is DNA-directed RNA polymerase subunit beta of Neisseria gonorrhoeae (strain ATCC 700825 / FA 1090).